Reading from the N-terminus, the 187-residue chain is Alpha-D-galactose-binding lectin (187 aa).

The first 37 residues, 1–37, serve as a signal peptide directing secretion; it reads MTFAKQSCFNSIILLSIATSYFKIGHKISELGNRIEK. An N-acetylthreonine modification is found at threonine 39. Residues 53–56, aspartate 64, 72–76, histidine 101, glycine 104, glutamate 112, 120–122, histidine 145, glycine 148, glutamate 156, and 164–166 contribute to the N-acetyl-alpha-D-galactosamine site; these read HPKG, DIHER, DRH, and DKH.

As to quaternary structure, homodimer. In terms of tissue distribution, highest expression in the posterior part of the mantle. Highly expressed in gills and to a lesser extent in mid mantle and anterior muscle. Lowest expression in digestive gland and posterior adductor muscle. Scarcely detectable in hemocytes.

With respect to regulation, agglutination of E.coli is inhibited by alpha-galactoside melibiose, but not by beta-galactoside lactose. In terms of biological role, alpha-D-galactose-binding lectin. Binds D-GalNAc, but not glucose or its derivatives. Has hemagglutinating activity towards rabbit erythrocytes. Agglutinates bacteria. Has bacteriostatic activity on both Gram-positive and Gram-negative bacteria including B.subtilis, S.aureus, E.coli and V.parahaemolyticus, respectively. Has a dose-dependent cytotoxic effect on the human globotriaosylceramide (Gb3)-expressing Epstein-Barr virus (EBV)-positive Burkitt's lymphoma (Raji) cell line. Has dose-dependent cytotoxic effect on another Burkitt's lymphoma (Ramos) cell line, which does not possess the EBV genome, but also expresses Gb3. Binds to Gb3 in these cells leading to phosphorylation of MEK1/2, ERK1/2, JNK and p38 kinase, activation of caspase-9/3 and to expression of p21 and tumor necrosis factor (TNF)-alpha. No cytotoxic effect on the human chronic myelogenous leukemia (K-562) cell line, which does not express Gb3. May be involved in innate immunity acting as an antibacterial or antifungal agent. May be a pattern recognition receptor (PRR) involved in recognition of glycans found on parasitic or symbiotic microorganisms. The protein is Alpha-D-galactose-binding lectin of Mytilus galloprovincialis (Mediterranean mussel).